Here is a 75-residue protein sequence, read N- to C-terminus: U6-lycotoxin-Ls1h (75 aa).

The signal sequence occupies residues 1 to 21 (MKLLLFTALVLVVISLIEVEA). Residues 22–25 (ENER) constitute a propeptide that is removed on maturation.

Belongs to the neurotoxin 19 (CSTX) family. 06 (U6-Lctx) subfamily. Contains 4 disulfide bonds. As to expression, expressed by the venom gland.

The protein localises to the secreted. This is U6-lycotoxin-Ls1h from Lycosa singoriensis (Wolf spider).